The chain runs to 394 residues: Methane monooxygenase component A beta chain (394 aa).

As to quaternary structure, m.trichosporium has two forms of methane monooxygenase, a soluble and a membrane-bound type. The soluble type consists of four components (A to D): protein A, comprising three chains, in an alpha-2, beta-2, gamma-2 configuration, is a nonheme iron protein containing an unusual mu-hydroxo bridge structure at its active site and interacts with both oxygen and methane.

It catalyses the reaction methane + NADH + O2 + H(+) = methanol + NAD(+) + H2O. It carries out the reaction methane + NADPH + O2 + H(+) = methanol + NADP(+) + H2O. Its function is as follows. Responsible for the initial oxygenation of methane to methanol in methanotrophs. It also catalyzes the monohydroxylation of a variety of unactivated alkenes, alicyclic, aromatic and heterocyclic compounds. In Methylosinus trichosporium, this protein is Methane monooxygenase component A beta chain (mmoY).